Consider the following 264-residue polypeptide: 5'-nucleotidase SurE (264 aa).

4 residues coordinate a divalent metal cation: Asp-9, Asp-10, Ser-40, and Asn-95.

This sequence belongs to the SurE nucleotidase family. A divalent metal cation serves as cofactor.

It is found in the cytoplasm. It carries out the reaction a ribonucleoside 5'-phosphate + H2O = a ribonucleoside + phosphate. In terms of biological role, nucleotidase that shows phosphatase activity on nucleoside 5'-monophosphates. The sequence is that of 5'-nucleotidase SurE from Helicobacter hepaticus (strain ATCC 51449 / 3B1).